We begin with the raw amino-acid sequence, 170 residues long: Head completion protein (170 aa).

The protein localises to the virion. Head completion protein that closes the capsid once the viral DNA has been packaged. Probably part of the head-tail connector by binding to the portal protein and to the tail completion protein. This chain is Head completion protein, found in Escherichia coli (Enterobacteria phage T5).